The sequence spans 664 residues: UvrABC system protein B (664 aa).

The region spanning 25–182 (KSFGEGKNKI…RKFLHIQYAR (158 aa)) is the Helicase ATP-binding domain. 38–45 (GVTGSGKT) contributes to the ATP binding site. Residues 91 to 114 (YYDYYQPEAYVPSSDTFIEKDMSM) carry the Beta-hairpin motif. The Helicase C-terminal domain occupies 429–595 (QIEDLLNEIR…TIQKEIHDIL (167 aa)). Positions 625–660 (DKLREALKREMLRYANDMDFEKAAMFRDKMLALGPD) constitute a UVR domain.

This sequence belongs to the UvrB family. As to quaternary structure, forms a heterotetramer with UvrA during the search for lesions. Interacts with UvrC in an incision complex.

The protein localises to the cytoplasm. The UvrABC repair system catalyzes the recognition and processing of DNA lesions. A damage recognition complex composed of 2 UvrA and 2 UvrB subunits scans DNA for abnormalities. Upon binding of the UvrA(2)B(2) complex to a putative damaged site, the DNA wraps around one UvrB monomer. DNA wrap is dependent on ATP binding by UvrB and probably causes local melting of the DNA helix, facilitating insertion of UvrB beta-hairpin between the DNA strands. Then UvrB probes one DNA strand for the presence of a lesion. If a lesion is found the UvrA subunits dissociate and the UvrB-DNA preincision complex is formed. This complex is subsequently bound by UvrC and the second UvrB is released. If no lesion is found, the DNA wraps around the other UvrB subunit that will check the other stand for damage. The sequence is that of UvrABC system protein B from Leptospira biflexa serovar Patoc (strain Patoc 1 / Ames).